A 415-amino-acid polypeptide reads, in one-letter code: Tyrosine--tRNA ligase (415 aa).

Residue Tyr-34 participates in L-tyrosine binding. Residues 39-48 (PTADSLHLGH) carry the 'HIGH' region motif. Positions 164 and 168 each coordinate L-tyrosine. A 'KMSKS' region motif is present at residues 226–230 (KFGKS). Residue Lys-229 participates in ATP binding. The S4 RNA-binding domain maps to 348 to 415 (KNVVDFLVDG…KKKYFLGKVK (68 aa)).

It belongs to the class-I aminoacyl-tRNA synthetase family. TyrS type 1 subfamily. In terms of assembly, homodimer.

It is found in the cytoplasm. It carries out the reaction tRNA(Tyr) + L-tyrosine + ATP = L-tyrosyl-tRNA(Tyr) + AMP + diphosphate + H(+). Functionally, catalyzes the attachment of tyrosine to tRNA(Tyr) in a two-step reaction: tyrosine is first activated by ATP to form Tyr-AMP and then transferred to the acceptor end of tRNA(Tyr). This is Tyrosine--tRNA ligase from Leuconostoc mesenteroides subsp. mesenteroides (strain ATCC 8293 / DSM 20343 / BCRC 11652 / CCM 1803 / JCM 6124 / NCDO 523 / NBRC 100496 / NCIMB 8023 / NCTC 12954 / NRRL B-1118 / 37Y).